We begin with the raw amino-acid sequence, 210 residues long: Somatotropin-2 (210 aa).

The signal sequence occupies residues 1–22; that stretch reads MGQVFLLMPVLLVSCFLSQGAA. Zn(2+) is bound at residue histidine 38. A disulfide bridge connects residues cysteine 71 and cysteine 183. Glutamate 192 provides a ligand contact to Zn(2+). A disulfide bond links cysteine 200 and cysteine 208.

This sequence belongs to the somatotropin/prolactin family.

It is found in the secreted. Its function is as follows. Growth hormone plays an important role in growth control and is involved in the regulation of several anabolic processes. Implicated as an osmoregulatory substance important for seawater adaptation. The sequence is that of Somatotropin-2 (gh2) from Oncorhynchus nerka (Sockeye salmon).